The following is a 305-amino-acid chain: Homoserine O-acetyltransferase (305 aa).

Cys142 serves as the catalytic Acyl-thioester intermediate. Residues Lys163 and Ser192 each coordinate substrate. The active-site Proton acceptor is His235. Residue Glu237 is part of the active site. Residue Arg249 participates in substrate binding.

It belongs to the MetA family.

The protein localises to the cytoplasm. It carries out the reaction L-homoserine + acetyl-CoA = O-acetyl-L-homoserine + CoA. Its pathway is amino-acid biosynthesis; L-methionine biosynthesis via de novo pathway; O-acetyl-L-homoserine from L-homoserine: step 1/1. Transfers an acetyl group from acetyl-CoA to L-homoserine, forming acetyl-L-homoserine. This chain is Homoserine O-acetyltransferase, found in Acetivibrio thermocellus (strain ATCC 27405 / DSM 1237 / JCM 9322 / NBRC 103400 / NCIMB 10682 / NRRL B-4536 / VPI 7372) (Clostridium thermocellum).